The primary structure comprises 149 residues: Oligosaccharyltransferase complex subunit OSTC (149 aa).

The Cytoplasmic segment spans residues 1–32; the sequence is MESLYRVPFLVLECPNLKLKKPPWVHMPSAMT. The chain crosses the membrane as a helical span at residues 33–53; that stretch reads VYALVVVSYFLITGGIIYDVI. At 54–83 the chain is on the extracellular side; sequence VEPPSVGSVTDEHGHQRPVAFLAYRVNGQY. A helical transmembrane segment spans residues 84 to 104; that stretch reads IMEGLASSFLFTMGGLGFIIL. At 105–117 the chain is on the cytoplasmic side; that stretch reads DRSNAPNIPKLNR. The chain crosses the membrane as a helical span at residues 118–138; the sequence is FLLLFIGFVCVLLSFFMARVF. Over 139–149 the chain is Extracellular; the sequence is MRMKLPGYLMG.

Belongs to the OSTC family. As to quaternary structure, component of STT3A-containing oligosaccharyl transferase (OST-A) complex. STT3A-containing complex assembly occurs through the formation of 3 subcomplexes. Subcomplex 1 contains RPN1 and TMEM258, subcomplex 2 contains the STT3A-specific subunits STT3A, DC2/OSTC, and KCP2 as well as the core subunit OST4, and subcomplex 3 contains RPN2, DAD1, and OST48. The OST-A complex can form stable complexes with the Sec61 complex or with both the Sec61 and TRAP complexes. Interacts with PSEN1 and NCSTN; indicative for an association with the gamma-secretase complex.

Its subcellular location is the endoplasmic reticulum. It localises to the membrane. It functions in the pathway protein modification; protein glycosylation. Its function is as follows. Subunit of STT3A-containing oligosaccharyl transferase (OST-A) complex that catalyzes the initial transfer of a defined glycan (Glc(3)Man(9)GlcNAc(2) in eukaryotes) from the lipid carrier dolichol-pyrophosphate to an asparagine residue within an Asn-X-Ser/Thr consensus motif in nascent polypeptide chains, the first step in protein N-glycosylation. N-glycosylation occurs cotranslationally and the complex associates with the Sec61 complex at the channel-forming translocon complex that mediates protein translocation across the endoplasmic reticulum (ER). Within the OST-A complex, acts as an adapter that anchors the OST-A complex to the Sec61 complex. May be involved in N-glycosylation of APP (amyloid-beta precursor protein). Can modulate gamma-secretase cleavage of APP by enhancing endoprotelysis of PSEN1. This chain is Oligosaccharyltransferase complex subunit OSTC, found in Bos taurus (Bovine).